We begin with the raw amino-acid sequence, 288 residues long: Serine/threonine-protein acetyltransferase YopJ (288 aa).

Residues His109 and Glu128 contribute to the active site. His109 contacts CoA. Residue 167-168 (RS) coordinates CoA. Cys172 is an active-site residue. 1D-myo-inositol hexakisphosphate-binding positions include 182-185 (KLYI) and 224-225 (KH). 227–230 (QGKK) is a binding site for CoA. Position 257 (Arg257) interacts with 1D-myo-inositol hexakisphosphate. 266 to 270 (DGKEL) contributes to the CoA binding site.

It belongs to the acetyltransferase YopJ family. 1D-myo-inositol hexakisphosphate serves as cofactor.

The protein localises to the secreted. The catalysed reaction is L-threonyl-[protein] + acetyl-CoA = O-acetyl-L-threonyl-[protein] + CoA. The enzyme catalyses L-seryl-[protein] + acetyl-CoA = O-acetyl-L-seryl-[protein] + CoA. Its activity is regulated as follows. 1D-myo-inositol hexakisphosphate activates protein-acetyltransferase activity via an allosteric mechanism: 1D-myo-inositol hexakisphosphate-binding induces a conformational rearrangement that stimulates the interaction with acetyl-CoA. Its function is as follows. Serine/threonine-protein acetyltransferase translocated into infected cells, which inhibits the host immune response and induces cell death by mediating acetylation of target proteins. Inhibits the MAPK and NF-kappa-B signaling pathways by acetylating protein-kinases such as MAP2K1, MAP2K6, MAP3K7/TAK1 and I-kappa-B kinase (CHUK/IKKA and IKBKB) on serine and threonine residues critical for their activation by phosphorylation, thereby preventing protein-kinase activation. Promotes pyroptosis, a programmed cell death, in host cells by mediating acetylation of MAP3K7/TAK1: MAP3K7/TAK1 inactivation triggers activation of caspase-8 (CASP8), followed by CASP8-dependent cleavage of gasdermin-D (GSDMD) and induction of pyroptosis. The sequence is that of Serine/threonine-protein acetyltransferase YopJ from Yersinia pestis.